The following is a 167-amino-acid chain: Small ribosomal subunit protein uS5 (167 aa).

The 64-residue stretch at 12–75 folds into the S5 DRBM domain; the sequence is LEERVVTINR…EDAKKNMVLV (64 aa).

Belongs to the universal ribosomal protein uS5 family. As to quaternary structure, part of the 30S ribosomal subunit. Contacts proteins S4 and S8.

With S4 and S12 plays an important role in translational accuracy. In terms of biological role, located at the back of the 30S subunit body where it stabilizes the conformation of the head with respect to the body. The chain is Small ribosomal subunit protein uS5 from Listeria monocytogenes serotype 4b (strain F2365).